Here is a 95-residue protein sequence, read N- to C-terminus: Large ribosomal subunit protein bL25 (95 aa).

This sequence belongs to the bacterial ribosomal protein bL25 family. Part of the 50S ribosomal subunit; part of the 5S rRNA/L5/L18/L25 subcomplex. Contacts the 5S rRNA. Binds to the 5S rRNA independently of L5 and L18.

Functionally, this is one of the proteins that binds to the 5S RNA in the ribosome where it forms part of the central protuberance. The sequence is that of Large ribosomal subunit protein bL25 from Aeromonas salmonicida (strain A449).